Reading from the N-terminus, the 241-residue chain is Ribonuclease P protein component 3 (241 aa).

This sequence belongs to the eukaryotic/archaeal RNase P protein component 3 family. As to quaternary structure, consists of a catalytic RNA component and at least 4-5 protein subunits.

It localises to the cytoplasm. The enzyme catalyses Endonucleolytic cleavage of RNA, removing 5'-extranucleotides from tRNA precursor.. Functionally, part of ribonuclease P, a protein complex that generates mature tRNA molecules by cleaving their 5'-ends. The polypeptide is Ribonuclease P protein component 3 (Methanococcoides burtonii (strain DSM 6242 / NBRC 107633 / OCM 468 / ACE-M)).